Here is a 356-residue protein sequence, read N- to C-terminus: Cyanide hydratase (356 aa).

Residues 8–287 (YKAAAVNAEP…EGLLFVDIDL (280 aa)) enclose the CN hydrolase domain. Glutamate 48 acts as the Proton acceptor in catalysis. The active site involves lysine 130. Cysteine 165 functions as the Nucleophile in the catalytic mechanism.

This sequence belongs to the carbon-nitrogen hydrolase superfamily. Nitrilase family. Oligomer of dimers, forming left-handed helical fibers.

The catalysed reaction is formamide = hydrogen cyanide + H2O. Functionally, catalyzes the hydration of cyanide to formamide. Degradation of cyanide may be important for plant pathogenic fungi in infection of cyanogenic plants. Can also transform some nitriles like 2-cyanopyridine and fumaronitrile. This Aspergillus niger protein is Cyanide hydratase.